A 292-amino-acid chain; its full sequence is 2-(5''-triphosphoribosyl)-3'-dephosphocoenzyme-A synthase (292 aa).

The protein belongs to the CitG/MdcB family.

It catalyses the reaction 3'-dephospho-CoA + ATP = 2'-(5''-triphospho-alpha-D-ribosyl)-3'-dephospho-CoA + adenine. Functionally, catalyzes the formation of 2-(5''-triphosphoribosyl)-3'-dephosphocoenzyme-A, the precursor of the prosthetic group of the holo-acyl carrier protein (gamma chain) of citrate lyase, from ATP and dephospho-CoA. The polypeptide is 2-(5''-triphosphoribosyl)-3'-dephosphocoenzyme-A synthase (Escherichia coli O6:K15:H31 (strain 536 / UPEC)).